Reading from the N-terminus, the 50-residue chain is Apoptotic protease-activating factor 1 (50 aa).

The CARD domain occupies 1–31; sequence ILKKDNYSYISFYNALIHEGYKDLAALLHSG. The NB-ARC domain maps to 46-50; it reads GGITS.

As to quaternary structure, monomer. Oligomerizes to a heptameric ring, known as the apoptosome, upon binding of cytochrome c and dATP. Oligomeric Apaf-1 and pro-caspase-9 bind to each other via their respective NH2-terminal CARD domains and consecutively mature caspase-9 is released from the complex. Interacts with APIP. Interacts (via CARD and NACHT domains) with NAIP/BIRC1 (via NACHT domain). Interacts with CIAO2A.

Its function is as follows. Oligomeric Apaf-1 mediates the cytochrome c-dependent autocatalytic activation of pro-caspase 9 (Apaf-3), leading to the activation of caspase-3 and apoptosis. This activation requires ATP. This chain is Apoptotic protease-activating factor 1 (APAF1), found in Canis lupus familiaris (Dog).